We begin with the raw amino-acid sequence, 139 residues long: Putative pre-16S rRNA nuclease (139 aa).

This sequence belongs to the YqgF nuclease family.

Its subcellular location is the cytoplasm. Could be a nuclease involved in processing of the 5'-end of pre-16S rRNA. The protein is Putative pre-16S rRNA nuclease of Streptococcus pneumoniae (strain JJA).